Reading from the N-terminus, the 120-residue chain is Cytochrome c-550 (120 aa).

The helical transmembrane segment at 5–25 (PLIPFLLIAVLGIGLTFFLSV) threads the bilayer. Residues 26-120 (KGLDDSREIA…DMAEWVSKIK (95 aa)) lie on the Periplasmic side of the membrane. Residues Cys-60, Cys-63, His-64, and Met-99 each coordinate heme c.

Binds 1 heme c group covalently per subunit.

The protein localises to the cell membrane. Its function is as follows. Not essential for growth on minimal or rich media. This is Cytochrome c-550 (cccA) from Bacillus subtilis (strain 168).